Here is a 287-residue protein sequence, read N- to C-terminus: Hydroxyethylthiazole kinase (287 aa).

Met-50 contributes to the substrate binding site. Positions 126 and 185 each coordinate ATP. Gly-212 provides a ligand contact to substrate.

The protein belongs to the Thz kinase family. Requires Mg(2+) as cofactor.

The catalysed reaction is 5-(2-hydroxyethyl)-4-methylthiazole + ATP = 4-methyl-5-(2-phosphooxyethyl)-thiazole + ADP + H(+). The protein operates within cofactor biosynthesis; thiamine diphosphate biosynthesis; 4-methyl-5-(2-phosphoethyl)-thiazole from 5-(2-hydroxyethyl)-4-methylthiazole: step 1/1. Functionally, catalyzes the phosphorylation of the hydroxyl group of 4-methyl-5-beta-hydroxyethylthiazole (THZ). The polypeptide is Hydroxyethylthiazole kinase (Methanobrevibacter smithii (strain ATCC 35061 / DSM 861 / OCM 144 / PS)).